A 332-amino-acid chain; its full sequence is Autoinducer 2 import system permease protein LsrD (332 aa).

7 helical membrane-spanning segments follow: residues 5 to 25 (LNWESALLALLIAEILLFGAL), 43 to 63 (ICIGIVALPLTLVIISGGIDI), 83 to 103 (GWPLWLAVSLTLLLGLLCGLF), 116 to 136 (LVITLGTLYLYGGGALLLSGM), 160 to 180 (LGGLPLPLVLFAIITFFFWLL), 210 to 230 (IPYVLYGLVGVASAVAALVMV), and 259 to 279 (IYGGSGSILGTALAALLVGYL).

It belongs to the binding-protein-dependent transport system permease family. AraH/RbsC subfamily. As to quaternary structure, the complex is composed of two ATP-binding proteins (LsrA), two transmembrane proteins (LsrC and LsrD) and a solute-binding protein (LsrB).

It localises to the cell inner membrane. Part of the ABC transporter complex LsrABCD involved in autoinducer 2 (AI-2) import. Probably responsible for the translocation of the substrate across the membrane. The sequence is that of Autoinducer 2 import system permease protein LsrD (lsrD) from Klebsiella pneumoniae subsp. pneumoniae (strain ATCC 700721 / MGH 78578).